We begin with the raw amino-acid sequence, 591 residues long: ATPase family AAA domain-containing protein 3A (591 aa).

Residues 1–52 (MSWLFGIKGPKGEGTGPPLPLPPAQPGAEGGGDRGAGDRPSPKDKWSNFDPT) form a disordered region. S2 carries the post-translational modification N-acetylserine. Residues 2-49 (SWLFGIKGPKGEGTGPPLPLPPAQPGAEGGGDRGAGDRPSPKDKWSNF) form a required for interaction with the inner surface of the mitochondrial outer membrane region. The Mitochondrial intermembrane segment spans residues 2–245 (SWLFGIKGPK…FRAFVTDWDK (244 aa)). Positions 31 to 47 (GGDRGAGDRPSPKDKWS) are enriched in basic and acidic residues. Residues 55–216 (ERAAKAAREL…REQIRLKAAE (162 aa)) are a coiled coil. Residues 246–263 (VTATVAGLTLLAVGVYSA) traverse the membrane as a helical segment. The Mitochondrial matrix segment spans residues 264–586 (KNATSVAGRY…DSQTNKPPHP (323 aa)). The segment at 289 to 304 (RISVLEALRHPIQVSR) is S100B-binding. 351–358 (GPPGTGKT) contributes to the ATP binding site. The residue at position 490 (K490) is an N6-acetyllysine; alternate. Residue K490 is modified to N6-succinyllysine; alternate. K494 and K512 each carry N6-acetyllysine. A disordered region spans residues 572-591 (KVERPDSQTNKPPHPSLLSC).

It belongs to the AAA ATPase family. As to quaternary structure, can form homooligomers. Homodimer formation at the N-terminus may be regulated by ATP and is required for the interaction with the inner surface of the mitochondrial outer membrane and correct mitochondrial homeostasis. Interacts with components of the mitochondrial ribosome and with other proteins involved in mitochondrial RNA metabolism. May also interact with protein involved in lipid metabolism, including STARD9. May interact with FAM210A. Interacts with GADD45GIP1. Interacts with S100B in a Ca(+2)- and Zn(+2)-dependent manner; this interaction probably occurs in the cytosol prior to mitochondrial targeting. S100B could assist ATAD3A cytoplasmic processing, preventing aggregation and favoring mitochondrial localization. Interacts with HSP60/HSPD1. Interacts with CLPB. Interacts with EIF2AK3/PERK; ATAD3A and EIF2S1/eIF-2-alpha occupy a common binding site within the cytoplasmic loop of EIF2AK3/PERK, leading to prevent EIF2AK3/PERK association with its substrate EIF2S1/eIF-2-alpha. In terms of tissue distribution, expressed in heart, spleen, kidney, liver and at smaller levels, in lung and muscle (at protein level).

It is found in the mitochondrion inner membrane. The protein resides in the mitochondrion matrix. Its subcellular location is the mitochondrion nucleoid. The enzyme catalyses ATP + H2O = ADP + phosphate + H(+). Essential for mitochondrial network organization, mitochondrial metabolism and cell growth at organism and cellular level. May play an important role in mitochondrial protein synthesis. May also participate in mitochondrial DNA replication. May bind to mitochondrial DNA D-loops and contribute to nucleoid stability. Required for enhanced channeling of cholesterol for hormone-dependent steroidogenesis. Involved in mitochondrial-mediated antiviral innate immunity. Required to protect mitochondria from the PERK-mediated unfolded protein response: specifically inhibits the activity of EIF2AK3/PERK at mitochondria-endoplasmic reticulum contact sites, thereby providing a safe haven for mitochondrial protein translation during endoplasmic reticulum stress. Ability to inhibit EIF2AK3/PERK is independent of its ATPase activity. Also involved in the mitochondrial DNA damage response by promoting signaling between damaged genomes and the mitochondrial membrane, leading to activation of the integrated stress response (ISR). This Mus musculus (Mouse) protein is ATPase family AAA domain-containing protein 3A (Atad3a).